The chain runs to 316 residues: MIKLGIVMDPISSINIKKDTSFAMLLEAQRRSWELHYMEMSDLYLHQGEARARTRLLQVENHPQQWYQFDREQDLALETLDVILMRKDPPFDTEYIYATYILERAEEKGTLIVNKPQSLRDCNEKLFTAWFPELTPDTLVTRNAAHLREFHQKHGDVIFKPLDGMGGASIFRLKKDDPNVGVIIETLTEHGNRFCMAQNFLPAIKEGDKRVLIVDGEPVPYCLARIPAQGETRGNLAAGGRGEARPLSESDWAIARAVAPTLQEKGLIFVGLDIIGDKLTEINVTSPTCAREIEAAFPDISITGMLMNAIEERLEK.

The region spanning 125-311 (KLFTAWFPEL…ITGMLMNAIE (187 aa)) is the ATP-grasp domain. Residue 151–207 (HQKHGDVIFKPLDGMGGASIFRLKKDDPNVGVIIETLTEHGNRFCMAQNFLPAIKEG) coordinates ATP. 2 residues coordinate Mg(2+): Glu-281 and Asn-283.

The protein belongs to the prokaryotic GSH synthase family. Mg(2+) serves as cofactor. Mn(2+) is required as a cofactor.

The enzyme catalyses gamma-L-glutamyl-L-cysteine + glycine + ATP = glutathione + ADP + phosphate + H(+). The protein operates within sulfur metabolism; glutathione biosynthesis; glutathione from L-cysteine and L-glutamate: step 2/2. The chain is Glutathione synthetase from Photorhabdus laumondii subsp. laumondii (strain DSM 15139 / CIP 105565 / TT01) (Photorhabdus luminescens subsp. laumondii).